Consider the following 284-residue polypeptide: Formamidopyrimidine-DNA glycosylase (284 aa).

Pro-2 serves as the catalytic Schiff-base intermediate with DNA. The active-site Proton donor is the Glu-3. Lys-58 serves as the catalytic Proton donor; for beta-elimination activity. DNA-binding residues include His-97, Arg-120, and Arg-165. An FPG-type zinc finger spans residues 250–284 (FVYDRAGEPCKVCGTPVRQIVQGQRSTFYCTHCQH). Arg-274 functions as the Proton donor; for delta-elimination activity in the catalytic mechanism.

This sequence belongs to the FPG family. Monomer. It depends on Zn(2+) as a cofactor.

The enzyme catalyses Hydrolysis of DNA containing ring-opened 7-methylguanine residues, releasing 2,6-diamino-4-hydroxy-5-(N-methyl)formamidopyrimidine.. It carries out the reaction 2'-deoxyribonucleotide-(2'-deoxyribose 5'-phosphate)-2'-deoxyribonucleotide-DNA = a 3'-end 2'-deoxyribonucleotide-(2,3-dehydro-2,3-deoxyribose 5'-phosphate)-DNA + a 5'-end 5'-phospho-2'-deoxyribonucleoside-DNA + H(+). Its function is as follows. Involved in base excision repair of DNA damaged by oxidation or by mutagenic agents. Acts as a DNA glycosylase that recognizes and removes damaged bases. Has a preference for oxidized purines, such as 7,8-dihydro-8-oxoguanine (8-oxoG). Has AP (apurinic/apyrimidinic) lyase activity and introduces nicks in the DNA strand. Cleaves the DNA backbone by beta-delta elimination to generate a single-strand break at the site of the removed base with both 3'- and 5'-phosphates. The protein is Formamidopyrimidine-DNA glycosylase of Cupriavidus pinatubonensis (strain JMP 134 / LMG 1197) (Cupriavidus necator (strain JMP 134)).